Reading from the N-terminus, the 1169-residue chain is Zinc finger protein 862 (1169 aa).

In terms of domain architecture, KRAB 1 spans 11-77 (VTFDDITVYL…SVQGQRSLLE (67 aa)). Residues 135 to 218 (KPRSIQKSWF…RDPIWAARFR (84 aa)) form a TTF-type 1 zinc finger. Residues 333–404 (VVFEDVAVYF…DPNGPKWGKG (72 aa)) form the KRAB 2 domain. The segment at 461 to 544 (RPRSIQRSWF…KEDTPHTALV (84 aa)) adopts a TTF-type 2 zinc-finger fold.

It localises to the nucleus. In terms of biological role, may be involved in transcriptional regulation. The sequence is that of Zinc finger protein 862 (ZNF862) from Homo sapiens (Human).